Consider the following 107-residue polypeptide: Holo-[acyl-carrier-protein] synthase (107 aa).

Residues Asp10 and Glu54 each contribute to the Mg(2+) site.

It belongs to the P-Pant transferase superfamily. AcpS family. Requires Mg(2+) as cofactor.

It is found in the cytoplasm. It carries out the reaction apo-[ACP] + CoA = holo-[ACP] + adenosine 3',5'-bisphosphate + H(+). Functionally, transfers the 4'-phosphopantetheine moiety from coenzyme A to a Ser of acyl-carrier-protein. In Mycoplasma mobile (strain ATCC 43663 / 163K / NCTC 11711) (Mesomycoplasma mobile), this protein is Holo-[acyl-carrier-protein] synthase.